The primary structure comprises 89 residues: Small ribosomal subunit protein bS18 (89 aa).

The protein belongs to the bacterial ribosomal protein bS18 family. Part of the 30S ribosomal subunit. Forms a tight heterodimer with protein bS6.

Binds as a heterodimer with protein bS6 to the central domain of the 16S rRNA, where it helps stabilize the platform of the 30S subunit. In Parabacteroides distasonis (strain ATCC 8503 / DSM 20701 / CIP 104284 / JCM 5825 / NCTC 11152), this protein is Small ribosomal subunit protein bS18.